Here is a 728-residue protein sequence, read N- to C-terminus: Catalase-peroxidase (728 aa).

The tryptophyl-tyrosyl-methioninium (Trp-Tyr) (with M-251) cross-link spans W97–Y225. H98 (proton acceptor) is an active-site residue. Residues Y225–M251 constitute a cross-link (tryptophyl-tyrosyl-methioninium (Tyr-Met) (with W-97)). A heme b-binding site is contributed by H266.

It belongs to the peroxidase family. Peroxidase/catalase subfamily. As to quaternary structure, homodimer or homotetramer. The cofactor is heme b. Post-translationally, formation of the three residue Trp-Tyr-Met cross-link is important for the catalase, but not the peroxidase activity of the enzyme.

The catalysed reaction is H2O2 + AH2 = A + 2 H2O. It catalyses the reaction 2 H2O2 = O2 + 2 H2O. Its function is as follows. Bifunctional enzyme with both catalase and broad-spectrum peroxidase activity. This chain is Catalase-peroxidase, found in Shewanella putrefaciens (strain CN-32 / ATCC BAA-453).